The sequence spans 259 residues: MLMVISPAKTLDFESTPVTPRFTQPQYLDHSQELIEQLRELSPAQISELMHVSDKIGGLNAARFGSWTPAFTQANAKQALLAFKGDVYTGLNADTFSDADFTYAQDHLRMLSGLYGLLRPLDLMMPYRLEMGTKLPNARGKDLYAFWGTRISEWLNEALAAQGDDVLLNLASNEYFSAVKRTALNARIINTEFKDLKNGQYKIISFYAKKARGMMSRFVIEERINDPAKLKQFDVQGYRFNAEQSKPDNLVFLRDHAPE.

Belongs to the UPF0246 family.

The polypeptide is UPF0246 protein PFLU_0992 (Pseudomonas fluorescens (strain SBW25)).